The sequence spans 260 residues: Carbonic anhydrase 3 (260 aa).

N-acetylalanine is present on alanine 2. Residues 3 to 259 (KEWGYASHNG…INNRVVRASF (257 aa)) enclose the Alpha-carbonic anhydrase domain. Serine 29, serine 43, serine 48, serine 50, and serine 55 each carry phosphoserine. Residues 64-67 (KTCR) are involved in proton transfer. Phosphothreonine is present on threonine 73. Positions 94, 96, and 119 each coordinate Zn(2+). Position 127 is a phosphotyrosine (tyrosine 127). A phosphothreonine mark is found at threonine 129 and threonine 176. Residues cysteine 182 and cysteine 187 each carry the S-glutathionyl cysteine modification. Substrate is bound at residue 198-199 (TT). The residue at position 216 (threonine 216) is a Phosphothreonine. Serine 219 carries the phosphoserine modification.

Belongs to the alpha-carbonic anhydrase family. The cofactor is Zn(2+). Post-translationally, S-thiolated both by thiol-disulfide exchange with glutathione disulfide and by oxyradical-initiated S-thiolation with reduced glutathione. In terms of processing, S-glutathionylated in hepatocytes under oxidative stress. In terms of tissue distribution, muscle specific.

It localises to the cytoplasm. It catalyses the reaction hydrogencarbonate + H(+) = CO2 + H2O. Activated by proton donors such as imidazole and the dipeptide histidylhistidine. Inhibited by coumarins and sulfonamide derivatives such as acetazolamide. Functionally, reversible hydration of carbon dioxide. The chain is Carbonic anhydrase 3 from Homo sapiens (Human).